A 172-amino-acid chain; its full sequence is Small ribosomal subunit protein uS5 (172 aa).

The 64-residue stretch at 17–80 folds into the S5 DRBM domain; it reads LREKMIAINR…EEARRNLAKI (64 aa).

The protein belongs to the universal ribosomal protein uS5 family. As to quaternary structure, part of the 30S ribosomal subunit. Contacts proteins S4 and S8.

With S4 and S12 plays an important role in translational accuracy. In terms of biological role, located at the back of the 30S subunit body where it stabilizes the conformation of the head with respect to the body. In Variovorax paradoxus (strain S110), this protein is Small ribosomal subunit protein uS5.